The primary structure comprises 341 residues: tRNA N6-adenosine threonylcarbamoyltransferase (341 aa).

Fe cation-binding residues include histidine 114 and histidine 118. Residues leucine 136 to glycine 140, aspartate 170, glycine 183, aspartate 187, and asparagine 275 contribute to the substrate site. Aspartate 303 is a binding site for Fe cation.

Belongs to the KAE1 / TsaD family. Requires Fe(2+) as cofactor.

Its subcellular location is the cytoplasm. The enzyme catalyses L-threonylcarbamoyladenylate + adenosine(37) in tRNA = N(6)-L-threonylcarbamoyladenosine(37) in tRNA + AMP + H(+). Its function is as follows. Required for the formation of a threonylcarbamoyl group on adenosine at position 37 (t(6)A37) in tRNAs that read codons beginning with adenine. Is involved in the transfer of the threonylcarbamoyl moiety of threonylcarbamoyl-AMP (TC-AMP) to the N6 group of A37, together with TsaE and TsaB. TsaD likely plays a direct catalytic role in this reaction. The sequence is that of tRNA N6-adenosine threonylcarbamoyltransferase from Mycobacterium avium (strain 104).